Consider the following 207-residue polypeptide: MAEYTLPDLDWDYGALEPHISGQINELHHSKHHATYVKGANDAVAKLEEARAKEDHSAILLNEKNLAFNLAGHVNHTIWWKNLSPNGGDKPTGELAAAIADAFGSFDKFRAQFHAAATTVQGSGWAALGWDTLGNKLLIFQVYDHQTNFPLGIVPLLLLDMWEHAFYLQYKNVKVDFAKAFWNVVNWADVQSRYAAATSQTKGLIFG.

Residues histidine 28, histidine 76, aspartate 160, and histidine 164 each contribute to the Fe cation site.

It belongs to the iron/manganese superoxide dismutase family. In terms of assembly, homotetramer. The cofactor is Fe cation.

The protein resides in the secreted. The catalysed reaction is 2 superoxide + 2 H(+) = H2O2 + O2. In terms of biological role, destroys superoxide anion radicals which are normally produced within the cells and which are toxic to biological systems. This Mycobacterium tuberculosis (strain CDC 1551 / Oshkosh) protein is Superoxide dismutase [Fe] (sodB).